The primary structure comprises 342 residues: tRNA N6-adenosine threonylcarbamoyltransferase (342 aa).

Positions 115 and 119 each coordinate Fe cation. Substrate contacts are provided by residues 137–141 (IVSGG), Asp-170, Gly-183, Asp-187, and Asn-276. Asp-304 contributes to the Fe cation binding site.

It belongs to the KAE1 / TsaD family. Fe(2+) serves as cofactor.

Its subcellular location is the cytoplasm. The catalysed reaction is L-threonylcarbamoyladenylate + adenosine(37) in tRNA = N(6)-L-threonylcarbamoyladenosine(37) in tRNA + AMP + H(+). Functionally, required for the formation of a threonylcarbamoyl group on adenosine at position 37 (t(6)A37) in tRNAs that read codons beginning with adenine. Is involved in the transfer of the threonylcarbamoyl moiety of threonylcarbamoyl-AMP (TC-AMP) to the N6 group of A37, together with TsaE and TsaB. TsaD likely plays a direct catalytic role in this reaction. This is tRNA N6-adenosine threonylcarbamoyltransferase from Staphylococcus haemolyticus (strain JCSC1435).